A 270-amino-acid polypeptide reads, in one-letter code: Protoheme IX farnesyltransferase (270 aa).

A run of 7 helical transmembrane segments spans residues 13 to 30 (LALL…LVPD), 33 to 53 (HATL…GSAL), 95 to 115 (LLVL…ALAW), 129 to 149 (LALA…WTLA), 156 to 176 (YRII…FWLF), 207 to 227 (LWLG…LMAP), and 249 to 269 (EATL…ALLL).

This sequence belongs to the UbiA prenyltransferase family. Protoheme IX farnesyltransferase subfamily.

Its subcellular location is the cell inner membrane. It carries out the reaction heme b + (2E,6E)-farnesyl diphosphate + H2O = Fe(II)-heme o + diphosphate. It functions in the pathway porphyrin-containing compound metabolism; heme O biosynthesis; heme O from protoheme: step 1/1. Its function is as follows. Converts heme B (protoheme IX) to heme O by substitution of the vinyl group on carbon 2 of heme B porphyrin ring with a hydroxyethyl farnesyl side group. In Geobacter sulfurreducens (strain ATCC 51573 / DSM 12127 / PCA), this protein is Protoheme IX farnesyltransferase.